The sequence spans 237 residues: DCN1-like protein 5 (237 aa).

Phosphoserine is present on residues Ser-9, Ser-41, and Ser-48. Positions 46–232 (FSSKKCLAWF…LLDEFVEWQK (187 aa)) constitute a DCUN1 domain.

In terms of assembly, part of a complex that contains DCUN1D5, CUL1 and RBX1; this interaction is bridged by CUL1. Interacts (via the DCUN1 domain) with the unneddylated cullins: interacts with CUL1, CUL2, CUL3, CUL4A, CUL4B and CUL5; these interactions promote the cullin neddylation and the identity of the cullin dictates the affinity of the interaction. Interacts (via DCUN1 domain) with UBE2M (N-terminally acetylated form) and probably with UBE2F (N-terminally acetylated form). May also interact with regulators or subunits of cullin-RING ligases such as RBX1, RNF7, ELOB and DDB1; these interactions are bridged by cullins. Interacts with CAND1; this interaction is bridged by cullins and strongly inhibits the neddylation of cullins. These CAND-cullin-DCNL complexes can only be neddylated in the presence of a substrate adapter. Post-translationally, phosphorylation at Ser-41 is independent of cullin's interaction. Phosphorylated in response to both TICAM1 and MYD88 dependent Toll-like receptor (TLR) pathway activation. Phosphorylated in response to IL1B stimulation.

The protein localises to the nucleus. The protein resides in the cytoplasm. It localises to the cytoskeleton. It is found in the spindle. Functionally, contributes to the neddylation of all cullins by transferring NEDD8 from N-terminally acetylated NEDD8-conjugating E2s enzyme to different cullin C-terminal domain-RBX complexes which is necessary for the activation of cullin-RING E3 ubiquitin ligases (CRLs). May play a role in DNA damage response and may participate in cell proliferation and anchorage-independent cell growth. The sequence is that of DCN1-like protein 5 from Pongo abelii (Sumatran orangutan).